Here is a 472-residue protein sequence, read N- to C-terminus: Adenosylhomocysteinase (472 aa).

Substrate-binding residues include T61, D136, and E196. 197-199 (TTT) contacts NAD(+). The substrate site is built by K226 and D230. Residues N231, 260–265 (GYGDVG), E283, N318, 339–341 (IGH), and N384 each bind NAD(+).

The protein belongs to the adenosylhomocysteinase family. NAD(+) is required as a cofactor.

The protein localises to the cytoplasm. It carries out the reaction S-adenosyl-L-homocysteine + H2O = L-homocysteine + adenosine. It functions in the pathway amino-acid biosynthesis; L-homocysteine biosynthesis; L-homocysteine from S-adenosyl-L-homocysteine: step 1/1. Its function is as follows. May play a key role in the regulation of the intracellular concentration of adenosylhomocysteine. This is Adenosylhomocysteinase from Cupriavidus pinatubonensis (strain JMP 134 / LMG 1197) (Cupriavidus necator (strain JMP 134)).